A 742-amino-acid polypeptide reads, in one-letter code: Vesicle-fusing ATPase (742 aa).

ATP contacts are provided by residues 499–504 (NGMVDC) and 539–546 (SGSGKTAL). Residue threonine 544 participates in Mg(2+) binding.

Belongs to the AAA ATPase family. Homohexamer. Binds to SNARE-SNAP complexes to form 20S particles. The cofactor is Mg(2+).

The protein resides in the cytoplasm. The catalysed reaction is ATP + H2O = ADP + phosphate + H(+). Its function is as follows. Required for vesicle-mediated transport. Catalyzes the fusion of transport vesicles within the Golgi cisternae. Is also required for transport from the endoplasmic reticulum to the Golgi stack. Seems to function as a fusion protein required for the delivery of cargo proteins to all compartments of the Golgi stack independent of vesicle origin. Required for maintaining the normal morphology of the Golgi apparatus. This chain is Vesicle-fusing ATPase, found in Arabidopsis thaliana (Mouse-ear cress).